Consider the following 72-residue polypeptide: Arrestin-E (72 aa).

Belongs to the arrestin family. Adrenal, cerebral cortex, heart, hypothalamus, intestine, liver, lung, pituitary, retina and testis.

In Rattus norvegicus (Rat), this protein is Arrestin-E (Ear).